Reading from the N-terminus, the 53-residue chain is UPF0391 membrane protein msr4317 (53 aa).

A run of 2 helical transmembrane segments spans residues 4-24 and 33-53; these read WIII…PALA and ILIG…FAVT.

This sequence belongs to the UPF0391 family.

It is found in the cell membrane. This Mesorhizobium japonicum (strain LMG 29417 / CECT 9101 / MAFF 303099) (Mesorhizobium loti (strain MAFF 303099)) protein is UPF0391 membrane protein msr4317.